The sequence spans 139 residues: D-ribose pyranase (139 aa).

The active-site Proton donor is His20. Substrate contacts are provided by residues Asp28, His106, and 128–130 (YAN).

Belongs to the RbsD / FucU family. RbsD subfamily. In terms of assembly, homodecamer.

The protein localises to the cytoplasm. It catalyses the reaction beta-D-ribopyranose = beta-D-ribofuranose. Its pathway is carbohydrate metabolism; D-ribose degradation; D-ribose 5-phosphate from beta-D-ribopyranose: step 1/2. In terms of biological role, catalyzes the interconversion of beta-pyran and beta-furan forms of D-ribose. This is D-ribose pyranase from Aliivibrio fischeri (strain MJ11) (Vibrio fischeri).